A 94-amino-acid chain; its full sequence is Aspartyl/glutamyl-tRNA(Asn/Gln) amidotransferase subunit C (94 aa).

Belongs to the GatC family. Heterotrimer of A, B and C subunits.

It carries out the reaction L-glutamyl-tRNA(Gln) + L-glutamine + ATP + H2O = L-glutaminyl-tRNA(Gln) + L-glutamate + ADP + phosphate + H(+). The catalysed reaction is L-aspartyl-tRNA(Asn) + L-glutamine + ATP + H2O = L-asparaginyl-tRNA(Asn) + L-glutamate + ADP + phosphate + 2 H(+). Its function is as follows. Allows the formation of correctly charged Asn-tRNA(Asn) or Gln-tRNA(Gln) through the transamidation of misacylated Asp-tRNA(Asn) or Glu-tRNA(Gln) in organisms which lack either or both of asparaginyl-tRNA or glutaminyl-tRNA synthetases. The reaction takes place in the presence of glutamine and ATP through an activated phospho-Asp-tRNA(Asn) or phospho-Glu-tRNA(Gln). In Heliobacterium modesticaldum (strain ATCC 51547 / Ice1), this protein is Aspartyl/glutamyl-tRNA(Asn/Gln) amidotransferase subunit C.